We begin with the raw amino-acid sequence, 202 residues long: Hypoxanthine-guanine phosphoribosyltransferase (202 aa).

The diphosphate site is built by Lys-66 and Gly-67. Residues Glu-122 and Asp-123 each coordinate Mg(2+). Catalysis depends on Asp-126, which acts as the Proton acceptor. Residues Lys-154, 175–176 (FV), and Asp-182 contribute to the GMP site. Arg-188 lines the diphosphate pocket.

Belongs to the purine/pyrimidine phosphoribosyltransferase family. Requires Mg(2+) as cofactor.

Its subcellular location is the cytoplasm. The enzyme catalyses IMP + diphosphate = hypoxanthine + 5-phospho-alpha-D-ribose 1-diphosphate. It carries out the reaction GMP + diphosphate = guanine + 5-phospho-alpha-D-ribose 1-diphosphate. Its pathway is purine metabolism; IMP biosynthesis via salvage pathway; IMP from hypoxanthine: step 1/1. It participates in purine metabolism; GMP biosynthesis via salvage pathway; GMP from guanine: step 1/1. In terms of biological role, purine salvage pathway enzyme that catalyzes the transfer of the ribosyl-5-phosphate group from 5-phospho-alpha-D-ribose 1-diphosphate (PRPP) to the N9 position of the 6-oxopurines hypoxanthine and guanine to form the corresponding ribonucleotides IMP (inosine 5'-monophosphate) and GMP (guanosine 5'-monophosphate), with the release of PPi. In Mycobacterium tuberculosis (strain CDC 1551 / Oshkosh), this protein is Hypoxanthine-guanine phosphoribosyltransferase (hpt).